The chain runs to 210 residues: RNA chaperone ProQ (210 aa).

Over residues 98 to 127 the composition is skewed to basic and acidic residues; it reads HAKASLEESKAKVAARRKEQAKKAREEAKA. The interval 98–155 is disordered; the sequence is HAKASLEESKAKVAARRKEQAKKAREEAKAKKPARATTPPKRRPQPAAVAKKQEKPVE.

The protein belongs to the ProQ family.

It localises to the cytoplasm. RNA chaperone with significant RNA binding, RNA strand exchange and RNA duplexing activities. The protein is RNA chaperone ProQ of Aliivibrio salmonicida (strain LFI1238) (Vibrio salmonicida (strain LFI1238)).